A 336-amino-acid chain; its full sequence is tRNA N6-adenosine threonylcarbamoyltransferase (336 aa).

2 residues coordinate Fe cation: His111 and His115. Substrate-binding positions include 134–138, Asp167, Gly180, Asp184, and Asn272; that span reads VVSGG. Asp300 contacts Fe cation.

It belongs to the KAE1 / TsaD family. Fe(2+) is required as a cofactor.

The protein resides in the cytoplasm. The catalysed reaction is L-threonylcarbamoyladenylate + adenosine(37) in tRNA = N(6)-L-threonylcarbamoyladenosine(37) in tRNA + AMP + H(+). Its function is as follows. Required for the formation of a threonylcarbamoyl group on adenosine at position 37 (t(6)A37) in tRNAs that read codons beginning with adenine. Is involved in the transfer of the threonylcarbamoyl moiety of threonylcarbamoyl-AMP (TC-AMP) to the N6 group of A37, together with TsaE and TsaB. TsaD likely plays a direct catalytic role in this reaction. This Caldicellulosiruptor bescii (strain ATCC BAA-1888 / DSM 6725 / KCTC 15123 / Z-1320) (Anaerocellum thermophilum) protein is tRNA N6-adenosine threonylcarbamoyltransferase.